We begin with the raw amino-acid sequence, 339 residues long: DNA-directed RNA polymerase subunit alpha (339 aa).

The interval 1–233 (MVREEVAGST…DLFLPFLHAE (233 aa)) is alpha N-terminal domain (alpha-NTD). The alpha C-terminal domain (alpha-CTD) stretch occupies residues 264-339 (KKGIPLNCIF…IDLLKNKLSF (76 aa)).

This sequence belongs to the RNA polymerase alpha chain family. As to quaternary structure, in plastids the minimal PEP RNA polymerase catalytic core is composed of four subunits: alpha, beta, beta', and beta''. When a (nuclear-encoded) sigma factor is associated with the core the holoenzyme is formed, which can initiate transcription.

The protein localises to the plastid. It localises to the chloroplast. It carries out the reaction RNA(n) + a ribonucleoside 5'-triphosphate = RNA(n+1) + diphosphate. DNA-dependent RNA polymerase catalyzes the transcription of DNA into RNA using the four ribonucleoside triphosphates as substrates. This chain is DNA-directed RNA polymerase subunit alpha, found in Elymus californicus (California bottlebrush grass).